We begin with the raw amino-acid sequence, 446 residues long: Mannosyltransferase KTR6 (446 aa).

The Cytoplasmic segment spans residues 1-8 (MHVLLSKK). The helical; Signal-anchor for type II membrane protein transmembrane segment at 9 to 29 (IARFLLISFVFVLALMVTINH) threads the bilayer. Residues 30 to 114 (PKTKQMSEQY…MVPSYINHRG (85 aa)) are stem region. The Lumenal portion of the chain corresponds to 30 to 446 (PKTKQMSEQY…DKPEGWDRLP (417 aa)). Residues Asn82 and Asn98 are each glycosylated (N-linked (GlcNAc...) asparagine). Residues 115–446 (SPPKACFVSL…DKPEGWDRLP (332 aa)) form a catalytic region. The Nucleophile role is filled by Glu334.

Belongs to the glycosyltransferase 15 family.

It is found in the membrane. Its pathway is protein modification; protein glycosylation. Glycosyltransferase that transfers an alpha-D-mannosyl residue from GDP-mannose into lipid-linked oligosaccharide, forming an alpha-(1-&gt;2)-D-mannosyl-D-mannose linkage. Required for addition of mannosylphosphate in yeast mannan. Recognizes any oligosaccharides with at least one alpha-1,2-linked mannobiose unit. This is Mannosyltransferase KTR6 (KTR6) from Saccharomyces cerevisiae (strain ATCC 204508 / S288c) (Baker's yeast).